Here is a 410-residue protein sequence, read N- to C-terminus: Elongation factor Tu, chloroplastic (410 aa).

The region spanning 10–214 (KPHVNIGTIG…QVDAYIPTPE (205 aa)) is the tr-type G domain. The G1 stretch occupies residues 19–26 (GHVDHGKT). 19–26 (GHVDHGKT) serves as a coordination point for GTP. Residue Thr-26 coordinates Mg(2+). Residues 60–64 (GITIN) are G2. The segment at 81 to 84 (DCPG) is G3. GTP-binding positions include 81–85 (DCPGH) and 136–139 (NKED). Positions 136 to 139 (NKED) are G4. The G5 stretch occupies residues 174–176 (SAL).

The protein belongs to the TRAFAC class translation factor GTPase superfamily. Classic translation factor GTPase family. EF-Tu/EF-1A subfamily.

It is found in the plastid. The protein localises to the chloroplast. It carries out the reaction GTP + H2O = GDP + phosphate + H(+). Functionally, GTP hydrolase that promotes the GTP-dependent binding of aminoacyl-tRNA to the A-site of ribosomes during protein biosynthesis. In Chlorokybus atmophyticus (Soil alga), this protein is Elongation factor Tu, chloroplastic (tufA).